Here is a 240-residue protein sequence, read N- to C-terminus: 14-3-3 protein 3 (240 aa).

Belongs to the 14-3-3 family. In terms of assembly, interacts with coactosin. Interacts with ACTO/actophorin.

Its subcellular location is the cytoplasm. The protein resides in the cell projection. It localises to the phagocytic cup. Functionally, adapter protein which is required for phagocytosis and motility, probably by regulating actin cytoskeleton dynamics. During phagocytosis, plays a role in the initiation and/or formation of the phagocytic cup and is involved in the recruitment of the actin binding protein coactosin to the phagocytic cup. This chain is 14-3-3 protein 3, found in Entamoeba histolytica (strain ATCC 30459 / HM-1:IMSS / ABRM).